The following is a 143-amino-acid chain: MTADRQWVKIIARWLARIDGISGMLRLAMLGLTGVSTMSFTLKDYGLERLVWPLIGAMCVGTLLFAYYYTEGGVWNQVHRDKRDMSQNYATPFQKISNEMTARGLYAGEKGSELSQEERQAIQKEIDMAYMELRDGIEVEKDD.

The next 2 helical transmembrane spans lie at 20–42 (GISGMLRLAMLGLTGVSTMSFTL) and 52–74 (WPLIGAMCVGTLLFAYYYTEGGV).

It is found in the host membrane. This chain is Putative transmembrane protein ORF32, found in Haloarcula hispanica (His1V).